A 162-amino-acid chain; its full sequence is MAAVEAAKTPRFILLIIEWVFALVAFAVMGHYLFDDRRSSFEYLTAICILVWLVVMIYMVILCCGRALPPLIEAAIFLLFAILVFIAFLVTAVKCNNSETIVIAGQTISRKVCEGESEPKAAAAFAFLLGLLLAGSSVLGCIAFRRPSAPPLSSFQNPTSSV.

The Cytoplasmic portion of the chain corresponds to 1 to 11; the sequence is MAAVEAAKTPR. Residues 12–32 form a helical membrane-spanning segment; the sequence is FILLIIEWVFALVAFAVMGHY. The Extracellular segment spans residues 33–43; that stretch reads LFDDRRSSFEY. A helical membrane pass occupies residues 44-64; the sequence is LTAICILVWLVVMIYMVILCC. Over 65 to 69 the chain is Cytoplasmic; the sequence is GRALP. The chain crosses the membrane as a helical span at residues 70 to 90; sequence PLIEAAIFLLFAILVFIAFLV. The Extracellular portion of the chain corresponds to 91-123; the sequence is TAVKCNNSETIVIAGQTISRKVCEGESEPKAAA. Asn96 carries N-linked (GlcNAc...) asparagine glycosylation. The chain crosses the membrane as a helical span at residues 124-144; the sequence is AFAFLLGLLLAGSSVLGCIAF. Topologically, residues 145–162 are cytoplasmic; sequence RRPSAPPLSSFQNPTSSV.

This sequence belongs to the Casparian strip membrane proteins (CASP) family. In terms of assembly, homodimer and heterodimers.

The protein localises to the cell membrane. The polypeptide is CASP-like protein 0U1 (Chlorokybus atmophyticus (Soil alga)).